Here is a 468-residue protein sequence, read N- to C-terminus: ATP synthase subunit beta (468 aa).

ATP is bound at residue 155–162 (GGAGVGKT).

This sequence belongs to the ATPase alpha/beta chains family. In terms of assembly, F-type ATPases have 2 components, CF(1) - the catalytic core - and CF(0) - the membrane proton channel. CF(1) has five subunits: alpha(3), beta(3), gamma(1), delta(1), epsilon(1). CF(0) has three main subunits: a(1), b(2) and c(9-12). The alpha and beta chains form an alternating ring which encloses part of the gamma chain. CF(1) is attached to CF(0) by a central stalk formed by the gamma and epsilon chains, while a peripheral stalk is formed by the delta and b chains.

It localises to the cell membrane. The enzyme catalyses ATP + H2O + 4 H(+)(in) = ADP + phosphate + 5 H(+)(out). In terms of biological role, produces ATP from ADP in the presence of a proton gradient across the membrane. The catalytic sites are hosted primarily by the beta subunits. In Streptococcus thermophilus (strain CNRZ 1066), this protein is ATP synthase subunit beta.